A 277-amino-acid polypeptide reads, in one-letter code: Undecaprenyl-diphosphatase (277 aa).

6 helical membrane-spanning segments follow: residues 47–67 (FNIIIQLAAILAVVWEFRGKI), 85–105 (ANLLIAFFPAVVLGVLFADLI), 108–128 (WLFNPITVALALVVGGVVMLW), 187–207 (FSFFLAMPTMVGAAVYSGYVY), 218–238 (VFAVGFVTSFVFAMLAVRALL), and 249–269 (FAWYRIAFGLLILATWQFHLI).

It belongs to the UppP family.

The protein resides in the cell inner membrane. It catalyses the reaction di-trans,octa-cis-undecaprenyl diphosphate + H2O = di-trans,octa-cis-undecaprenyl phosphate + phosphate + H(+). Catalyzes the dephosphorylation of undecaprenyl diphosphate (UPP). Confers resistance to bacitracin. This chain is Undecaprenyl-diphosphatase, found in Pseudomonas aeruginosa (strain ATCC 15692 / DSM 22644 / CIP 104116 / JCM 14847 / LMG 12228 / 1C / PRS 101 / PAO1).